The chain runs to 103 residues: Large ribosomal subunit protein uL23 (103 aa).

It belongs to the universal ribosomal protein uL23 family. Part of the 50S ribosomal subunit. Contacts protein L29, and trigger factor when it is bound to the ribosome.

In terms of biological role, one of the early assembly proteins it binds 23S rRNA. One of the proteins that surrounds the polypeptide exit tunnel on the outside of the ribosome. Forms the main docking site for trigger factor binding to the ribosome. The polypeptide is Large ribosomal subunit protein uL23 (Chlorobium phaeovibrioides (strain DSM 265 / 1930) (Prosthecochloris vibrioformis (strain DSM 265))).